The sequence spans 812 residues: Probable beta-glucosidase D (812 aa).

Residues 1-18 (MRVPSLSVLSFLLGTALA) form the signal peptide. Residues Asn53 and Asn188 are each glycosylated (N-linked (GlcNAc...) asparagine). Positions 186–248 (ETNRTGGMGG…GMGGGMAGSS (63 aa)) are disordered. Residues 191-207 (GGMGGGGGAPGGGGMGR) show a composition bias toward gly residues. The segment covering 211–225 (FSSSVPGGMSPTSSA) has biased composition (polar residues). Positions 236 to 245 (GGSGMGGGMA) are enriched in gly residues. Asn296 carries N-linked (GlcNAc...) asparagine glycosylation. Residue Asp324 is part of the active site. Residues Asn360, Asn384, Asn422, Asn501, Asn592, and Asn646 are each glycosylated (N-linked (GlcNAc...) asparagine).

The protein belongs to the glycosyl hydrolase 3 family.

It is found in the secreted. It carries out the reaction Hydrolysis of terminal, non-reducing beta-D-glucosyl residues with release of beta-D-glucose.. The protein operates within glycan metabolism; cellulose degradation. In terms of biological role, beta-glucosidases are one of a number of cellulolytic enzymes involved in the degradation of cellulosic biomass. Catalyzes the last step releasing glucose from the inhibitory cellobiose. The protein is Probable beta-glucosidase D (bglD) of Emericella nidulans (strain FGSC A4 / ATCC 38163 / CBS 112.46 / NRRL 194 / M139) (Aspergillus nidulans).